A 96-amino-acid chain; its full sequence is Large ribosomal subunit protein uL23 (96 aa).

The protein belongs to the universal ribosomal protein uL23 family. In terms of assembly, part of the 50S ribosomal subunit. Contacts protein L29, and trigger factor when it is bound to the ribosome.

Functionally, one of the early assembly proteins it binds 23S rRNA. One of the proteins that surrounds the polypeptide exit tunnel on the outside of the ribosome. Forms the main docking site for trigger factor binding to the ribosome. The protein is Large ribosomal subunit protein uL23 of Caldicellulosiruptor bescii (strain ATCC BAA-1888 / DSM 6725 / KCTC 15123 / Z-1320) (Anaerocellum thermophilum).